Consider the following 225-residue polypeptide: Ribose-5-phosphate isomerase A (225 aa).

Residues 26 to 29, 82 to 85, and 95 to 98 contribute to the substrate site; these read TGST, DGAD, and KGGG. Catalysis depends on Glu104, which acts as the Proton acceptor. Lys122 contacts substrate.

The protein belongs to the ribose 5-phosphate isomerase family. In terms of assembly, homodimer.

The catalysed reaction is aldehydo-D-ribose 5-phosphate = D-ribulose 5-phosphate. The protein operates within carbohydrate degradation; pentose phosphate pathway; D-ribose 5-phosphate from D-ribulose 5-phosphate (non-oxidative stage): step 1/1. Its function is as follows. Catalyzes the reversible conversion of ribose-5-phosphate to ribulose 5-phosphate. This Streptococcus mutans serotype c (strain ATCC 700610 / UA159) protein is Ribose-5-phosphate isomerase A.